Reading from the N-terminus, the 268-residue chain is Tropinone reductase homolog At2g29150 (268 aa).

Leucine 22–histidine 46 contacts NADP(+). Serine 155 contributes to the substrate binding site. The Proton acceptor role is filled by tyrosine 167.

It belongs to the short-chain dehydrogenases/reductases (SDR) family. SDR65C subfamily.

Enantiospecific reductase active on cyclic monoterpenes and small flexible lipophilic carbonyls. No activity with tropinone, nitrogen-containing tropinone analogs, tropine or pseudotropine as substrate. The protein is Tropinone reductase homolog At2g29150 of Arabidopsis thaliana (Mouse-ear cress).